Here is a 371-residue protein sequence, read N- to C-terminus: Protein RecA (371 aa).

75-82 (GPESSGKT) contacts ATP. Residues 343–371 (KAKDEPIADEDQPIDVVPNFDDQDVEPQN) are disordered.

It belongs to the RecA family.

It localises to the cytoplasm. In terms of biological role, can catalyze the hydrolysis of ATP in the presence of single-stranded DNA, the ATP-dependent uptake of single-stranded DNA by duplex DNA, and the ATP-dependent hybridization of homologous single-stranded DNAs. It interacts with LexA causing its activation and leading to its autocatalytic cleavage. The protein is Protein RecA of Corynebacterium urealyticum (strain ATCC 43042 / DSM 7109).